The chain runs to 412 residues: Serine hydroxymethyltransferase (412 aa).

(6S)-5,6,7,8-tetrahydrofolate contacts are provided by residues L119 and G123–L125. K228 carries the post-translational modification N6-(pyridoxal phosphate)lysine.

It belongs to the SHMT family. As to quaternary structure, homodimer. Pyridoxal 5'-phosphate serves as cofactor.

The protein localises to the cytoplasm. The enzyme catalyses (6R)-5,10-methylene-5,6,7,8-tetrahydrofolate + glycine + H2O = (6S)-5,6,7,8-tetrahydrofolate + L-serine. It participates in one-carbon metabolism; tetrahydrofolate interconversion. Its pathway is amino-acid biosynthesis; glycine biosynthesis; glycine from L-serine: step 1/1. Its function is as follows. Catalyzes the reversible interconversion of serine and glycine with tetrahydrofolate (THF) serving as the one-carbon carrier. This reaction serves as the major source of one-carbon groups required for the biosynthesis of purines, thymidylate, methionine, and other important biomolecules. Also exhibits THF-independent aldolase activity toward beta-hydroxyamino acids, producing glycine and aldehydes, via a retro-aldol mechanism. In Thermodesulfovibrio yellowstonii (strain ATCC 51303 / DSM 11347 / YP87), this protein is Serine hydroxymethyltransferase.